The sequence spans 298 residues: GTP cyclohydrolase FolE2 (298 aa).

Belongs to the GTP cyclohydrolase IV family.

The enzyme catalyses GTP + H2O = 7,8-dihydroneopterin 3'-triphosphate + formate + H(+). The protein operates within cofactor biosynthesis; 7,8-dihydroneopterin triphosphate biosynthesis; 7,8-dihydroneopterin triphosphate from GTP: step 1/1. Its function is as follows. Converts GTP to 7,8-dihydroneopterin triphosphate. This chain is GTP cyclohydrolase FolE2, found in Xylella fastidiosa (strain M23).